The following is a 477-amino-acid chain: MKVTLPEFERAGVLVVGDVMLDRYWYGPTSRISPEAPVPVVKVENIEERPGGAANVAMNIASLGATSRLVGLTGIDDAARALSQALANVNVKCDFVSVPTHPTITKLRVLSRNQQLIRLDFEEGFSGVDPQPMHERIQQALGSIGALVLSDYAKGALTSVQTMIRLAREAGVPVLIDPKGTDFERYRGATLLTPNLSEFEAVVGKCQDEAQIVERGMKLIAEFELSALLVTRSEQGMTLLQPGRPPLHMPTQAQEVYDVTGAGDTVIGVLAATLASGNTLEEACYFANAAAGVVVGKLGTSTVSPVELENAVRGRAETGFGVMSEEELKQAVAAARKRGEKVVMTNGVFDILHAGHVSYLANARKLGDRLIVAVNSDASTKRLKGETRPVNPLEQRMIVLGALEAVDWVVSFEEDTPQRLIAGILPDLLVKGGDYKPEQIAGSEEVWANGGEVLVLNFEDGCSTTNIIKKIQKDSDK.

A ribokinase region spans residues 1–318 (MKVTLPEFER…ENAVRGRAET (318 aa)). 195–198 (NLSE) provides a ligand contact to ATP. D264 is an active-site residue. The segment at 344-477 (MTNGVFDILH…IKKIQKDSDK (134 aa)) is cytidylyltransferase.

In the N-terminal section; belongs to the carbohydrate kinase PfkB family. This sequence in the C-terminal section; belongs to the cytidylyltransferase family. As to quaternary structure, homodimer.

It carries out the reaction D-glycero-beta-D-manno-heptose 7-phosphate + ATP = D-glycero-beta-D-manno-heptose 1,7-bisphosphate + ADP + H(+). The enzyme catalyses D-glycero-beta-D-manno-heptose 1-phosphate + ATP + H(+) = ADP-D-glycero-beta-D-manno-heptose + diphosphate. It functions in the pathway nucleotide-sugar biosynthesis; ADP-L-glycero-beta-D-manno-heptose biosynthesis; ADP-L-glycero-beta-D-manno-heptose from D-glycero-beta-D-manno-heptose 7-phosphate: step 1/4. It participates in nucleotide-sugar biosynthesis; ADP-L-glycero-beta-D-manno-heptose biosynthesis; ADP-L-glycero-beta-D-manno-heptose from D-glycero-beta-D-manno-heptose 7-phosphate: step 3/4. In terms of biological role, catalyzes the phosphorylation of D-glycero-D-manno-heptose 7-phosphate at the C-1 position to selectively form D-glycero-beta-D-manno-heptose-1,7-bisphosphate. Functionally, catalyzes the ADP transfer from ATP to D-glycero-beta-D-manno-heptose 1-phosphate, yielding ADP-D-glycero-beta-D-manno-heptose. The sequence is that of Bifunctional protein HldE from Klebsiella pneumoniae subsp. pneumoniae (strain ATCC 700721 / MGH 78578).